The chain runs to 132 residues: Small ribosomal subunit protein uS8 (132 aa).

Belongs to the universal ribosomal protein uS8 family. Part of the 30S ribosomal subunit. Contacts proteins S5 and S12.

Functionally, one of the primary rRNA binding proteins, it binds directly to 16S rRNA central domain where it helps coordinate assembly of the platform of the 30S subunit. In Xylella fastidiosa (strain M12), this protein is Small ribosomal subunit protein uS8.